Consider the following 279-residue polypeptide: Ultraviolet N-glycosylase/AP lyase (279 aa).

In terms of domain architecture, HhH spans L123 to G142. [4Fe-4S] cluster-binding residues include C203, C210, C213, and C219. Residues T256–R279 form a disordered region.

The protein belongs to the Nth/MutY family. Requires [4Fe-4S] cluster as cofactor.

Functionally, DNA repair enzyme that has both DNA N-glycosylase activity and AP-lyase activity. Initiates repair at cis-syn pyrimidine dimers. Proceeds via an imino enzyme:DNA intermediate. The chain is Ultraviolet N-glycosylase/AP lyase (pdg) from Micrococcus luteus (strain ATCC 4698 / DSM 20030 / JCM 1464 / CCM 169 / CCUG 5858 / IAM 1056 / NBRC 3333 / NCIMB 9278 / NCTC 2665 / VKM Ac-2230) (Micrococcus lysodeikticus).